The chain runs to 50 residues: uncharacterized protein (50 aa).

An N-terminal signal peptide occupies residues 1 to 22 (MSKVAALGWGTLVYLGVGLLLA).

This is an uncharacterized protein from Dictyostelium discoideum (Social amoeba).